The primary structure comprises 241 residues: GTP cyclohydrolase 1 type 2 homolog (241 aa).

Residues H62, H63, D101, H207, and E211 each contribute to the a divalent metal cation site.

This sequence belongs to the GTP cyclohydrolase I type 2/NIF3 family. Homohexamer.

The polypeptide is GTP cyclohydrolase 1 type 2 homolog (Campylobacter jejuni subsp. jejuni serotype O:2 (strain ATCC 700819 / NCTC 11168)).